The sequence spans 461 residues: tRNA (guanine(10)-N(2))-methyltransferase TRMT11 (461 aa).

It belongs to the class I-like SAM-binding methyltransferase superfamily. TRM11 methyltransferase family. As to quaternary structure, part of the heterodimeric TRMT11-TRM112 methyltransferase complex; this complex forms an active tRNA methyltransferase, where TRMT112 acts as an activator of the catalytic subunit TRMT11.

Its subcellular location is the cytoplasm. The catalysed reaction is guanosine(10) in tRNA + S-adenosyl-L-methionine = N(2)-methylguanosine(10) in tRNA + S-adenosyl-L-homocysteine + H(+). Functionally, catalytic subunit of the TRMT11-TRM112 methyltransferase complex, that specifically mediates the S-adenosyl-L-methionine-dependent N(2)-methylation of guanosine nucleotide at position 10 (m2G10) in tRNAs. This is one of the major tRNA (guanine-N(2))-methyltransferases. The sequence is that of tRNA (guanine(10)-N(2))-methyltransferase TRMT11 from Gallus gallus (Chicken).